The chain runs to 883 residues: Alanine--tRNA ligase (883 aa).

Zn(2+) is bound by residues His565, His569, Cys675, and His679.

The protein belongs to the class-II aminoacyl-tRNA synthetase family. It depends on Zn(2+) as a cofactor.

Its subcellular location is the cytoplasm. The enzyme catalyses tRNA(Ala) + L-alanine + ATP = L-alanyl-tRNA(Ala) + AMP + diphosphate. Catalyzes the attachment of alanine to tRNA(Ala) in a two-step reaction: alanine is first activated by ATP to form Ala-AMP and then transferred to the acceptor end of tRNA(Ala). Also edits incorrectly charged Ser-tRNA(Ala) and Gly-tRNA(Ala) via its editing domain. The polypeptide is Alanine--tRNA ligase (Rhodospirillum rubrum (strain ATCC 11170 / ATH 1.1.1 / DSM 467 / LMG 4362 / NCIMB 8255 / S1)).